A 283-amino-acid chain; its full sequence is Formamidopyrimidine-DNA glycosylase (283 aa).

The active-site Schiff-base intermediate with DNA is Pro-2. Residue Glu-3 is the Proton donor of the active site. Lys-58 serves as the catalytic Proton donor; for beta-elimination activity. Positions 100, 119, and 162 each coordinate DNA. The segment at 247 to 283 (DVYGREGAPCKGEGCTGQIKRIVQSGRSSFYCAQCQR) adopts an FPG-type zinc-finger fold. Arg-273 acts as the Proton donor; for delta-elimination activity in catalysis.

The protein belongs to the FPG family. As to quaternary structure, monomer. It depends on Zn(2+) as a cofactor.

The enzyme catalyses Hydrolysis of DNA containing ring-opened 7-methylguanine residues, releasing 2,6-diamino-4-hydroxy-5-(N-methyl)formamidopyrimidine.. It carries out the reaction 2'-deoxyribonucleotide-(2'-deoxyribose 5'-phosphate)-2'-deoxyribonucleotide-DNA = a 3'-end 2'-deoxyribonucleotide-(2,3-dehydro-2,3-deoxyribose 5'-phosphate)-DNA + a 5'-end 5'-phospho-2'-deoxyribonucleoside-DNA + H(+). Functionally, involved in base excision repair of DNA damaged by oxidation or by mutagenic agents. Acts as a DNA glycosylase that recognizes and removes damaged bases. Has a preference for oxidized purines, such as 7,8-dihydro-8-oxoguanine (8-oxoG). Has AP (apurinic/apyrimidinic) lyase activity and introduces nicks in the DNA strand. Cleaves the DNA backbone by beta-delta elimination to generate a single-strand break at the site of the removed base with both 3'- and 5'-phosphates. This is Formamidopyrimidine-DNA glycosylase from Roseobacter denitrificans (strain ATCC 33942 / OCh 114) (Erythrobacter sp. (strain OCh 114)).